A 133-amino-acid chain; its full sequence is Small ribosomal subunit protein uS9 (133 aa).

A compositionally biased stretch (basic and acidic residues) spans 98–113; it reads RKPLKTEGHLSRDPRA. The segment at 98–133 is disordered; it reads RKPLKTEGHLSRDPRAKERRKYGLKKARKAPQFSKR. Residues 114-133 are compositionally biased toward basic residues; it reads KERRKYGLKKARKAPQFSKR.

Belongs to the universal ribosomal protein uS9 family.

In Parasynechococcus marenigrum (strain WH8102), this protein is Small ribosomal subunit protein uS9.